The chain runs to 1331 residues: Lysine-specific demethylase 3A-A (1331 aa).

Disordered regions lie at residues 243–280 (LNDK…PSKD), 358–381 (TPPQ…TQNL), and 497–532 (KVVK…VTYP). Residues 266-280 (TELKQTRNEEVPSKD) show a composition bias toward basic and acidic residues. The C6-type zinc finger occupies 683-708 (CDACDTTIFNLHWVCPKCGFGVCVDC). An LXXLL motif motif is present at residues 894–898 (LRNLL). The region spanning 1086 to 1291 (RREGKLNLAA…HCFWLTQEFR (206 aa)) is the JmjC domain. Fe cation contacts are provided by His-1130, Asp-1132, and His-1259.

The protein belongs to the JHDM2 histone demethylase family. The cofactor is Fe(2+).

It localises to the cytoplasm. The protein localises to the nucleus. It carries out the reaction N(6),N(6)-dimethyl-L-lysyl(9)-[histone H3] + 2 2-oxoglutarate + 2 O2 = L-lysyl(9)-[histone H3] + 2 formaldehyde + 2 succinate + 2 CO2. Histone demethylase that specifically demethylates 'Lys-9' of histone H3, thereby playing a central role in histone code. Preferentially demethylates mono- and dimethylated H3 'Lys-9' residue, with a preference for dimethylated residue, while it has weak or no activity on trimethylated H3 'Lys-9'. Demethylation of Lys residue generates formaldehyde and succinate. This is Lysine-specific demethylase 3A-A (kdm3a-a) from Xenopus laevis (African clawed frog).